A 610-amino-acid polypeptide reads, in one-letter code: MCGIVGAVAQRDVAEILINGLHRLEYRGYDSAGVAVINKQNELQRIRCLGKVKALDEAVSEKPLIGGTGIAHTRWATHGEPSETNAHPHSSGTFAVVHNGIIENHEELRELLKSRGYVFLSQTDTEVIAHLVEWEMRTTDSLLDAVKKAVKQLTGAYGMVVMDSRHPEHLVAARSGSPLVIGLGIGENFLASDQLALLSVTRRFIFLEEGDIAEITRRTVDIYDTHGNKAKREIHESNLENDAAEKGKFRHFMQKEIYEQPTALINTMEGRINHENVIVDSIGNGAKGILEKVEHIQIVACGTSYNAGMVARYWFESLAGVSCDVEIASEFRYRKFVTRPNSLLITLSQSGETADTLAALRLAKEKGYMAALTICNVAGSSLVRESDLAFMTRAGVEVGVASTKAFTTQLAALLMLVTALGKVKGHISVEKEREIIKAMQSLPAEIEKALAFDTEIEALAEDFAEKHHALFLGRGAFYPIAVEASLKLKEISYIHAEAYAAGELKHGPLALIDADMPVIVVAPNNELLEKVKSNIEEVRARGGQLYVFADKEAGFTPSEGMKIITMPKVNDIVAPIFYTIPMQLLSYYVALIKGTDVDQPRNLAKSVTVE.

The active-site Nucleophile; for GATase activity is the cysteine 2. Residues cysteine 2–arginine 218 form the Glutamine amidotransferase type-2 domain. 2 consecutive SIS domains span residues isoleucine 278 to histidine 426 and leucine 459 to proline 600. Lysine 605 acts as the For Fru-6P isomerization activity in catalysis.

Homodimer.

Its subcellular location is the cytoplasm. The enzyme catalyses D-fructose 6-phosphate + L-glutamine = D-glucosamine 6-phosphate + L-glutamate. Its function is as follows. Catalyzes the first step in hexosamine metabolism, converting fructose-6P into glucosamine-6P using glutamine as a nitrogen source. This chain is Glutamine--fructose-6-phosphate aminotransferase [isomerizing], found in Haemophilus influenzae (strain ATCC 51907 / DSM 11121 / KW20 / Rd).